Here is a 71-residue protein sequence, read N- to C-terminus: Exodeoxyribonuclease 7 small subunit (71 aa).

Belongs to the XseB family. Heterooligomer composed of large and small subunits.

Its subcellular location is the cytoplasm. The catalysed reaction is Exonucleolytic cleavage in either 5'- to 3'- or 3'- to 5'-direction to yield nucleoside 5'-phosphates.. Functionally, bidirectionally degrades single-stranded DNA into large acid-insoluble oligonucleotides, which are then degraded further into small acid-soluble oligonucleotides. The protein is Exodeoxyribonuclease 7 small subunit of Streptococcus pyogenes serotype M1.